The primary structure comprises 71 residues: Frenatin 2.3S (71 aa).

The N-terminal stretch at 1–22 (MAFLKKSLFLVLFLGLVSLSMG) is a signal peptide. The segment at 21–56 (MGEREKREEEEEEEEENKEEEANEEGKGESEEKRGL) is disordered. Residues 23 to 54 (EREKREEEEEEEEENKEEEANEEGKGESEEKR) constitute a propeptide that is removed on maturation. Acidic residues predominate over residues 28–43 (EEEEEEEEENKEEEAN). Residues 44 to 55 (EEGKGESEEKRG) show a composition bias toward basic and acidic residues. G70 carries the post-translational modification Glycine amide; in Frenatin 2.1S.

This sequence belongs to the frog skin active peptide (FSAP) family. Frenatin subfamily. In terms of processing, frenatin 2.3S is not amidated. Expressed by the skin glands.

The protein localises to the secreted. In terms of biological role, antimicrobial peptide with potent activity against Gram-negative bacteria. Shows immunostimulatory actions both in vitro and in vivo. In vitro, is cytotoxic to non-small cell lung adenocarcinoma A549 cells. Also, stimulates production of pro-inflammatory cytokines by mouse peritoneal macrophages and down-regulates production of the anti-inflammatory cytokine IL-10 by lipopolysaccharide (LPS)-stimulated cells. In vivo, intraperitoneal injection in mice enhances the activation state and homing capacity of Th1 type lymphocytes and promotes the recruitment, activation and tumoricidal capacities of peritoneal NK cells. Has a very weak activity in stimulation of insulin release and a weak hemolytic activity. Functionally, antimicrobial peptide with potent activity against some Gram-positive and Gram-negative bacteria. Has a multifunctional mode of action. It displays depolarization and bacterial cell leakage, and can also internalize into bacterial cells and alter specific gene expression involved in bacterial resistance mechanisms. Does not agglutinate bacteria and lipid vesicles, even a high concentrations. Also displays moderate cellular protection against yellow fever virus (YFV)-infected Vero cells without causing significant cytotoxicity. Shows a weak hemolytic activity, and is not cytotoxic to monocytes. Frenatin 2.3S (version without Gly-71) shows no or very weak antibacterial activity, shows no or very weak cytotoxicity to lung adenocarcinoma A549 cells and shows very weak hemolysis. It only stimulates production of pro-inflammatory cytokines IL-23 (but not IL-1beta and TNF-alpha) by mouse peritoneal macrophages and has no effect on the production of the anti-inflammatory cytokine IL-10. Frenatin 2.3S (version without Gly-71) very weakly stimulates insulin release. The polypeptide is Frenatin 2.3S (Sphaenorhynchus lacteus (Orinoco lime treefrog)).